Here is a 707-residue protein sequence, read N- to C-terminus: Anaerobic ribonucleoside-triphosphate reductase (707 aa).

Residues 4–95 form the ATP-cone domain; the sequence is FGVIKRDGSR…EYRHDRDLAR (92 aa). The Glycine radical domain maps to 584–707; sequence KKVNPYDKLD…EEVKRRVKHL (124 aa). Positions 645, 648, 663, and 666 each coordinate Zn(2+). G682 is modified (glycine radical).

Belongs to the anaerobic ribonucleoside-triphosphate reductase family. As to quaternary structure, forms a tetramer composed of two NrdD and two NrdG subunits.

The enzyme catalyses a ribonucleoside 5'-triphosphate + formate + H(+) = a 2'-deoxyribonucleoside 5'-triphosphate + CO2 + H2O. Its activity is regulated as follows. Activated under anaerobic conditions by NrdG, a tightly associated activase. Activation involves the formation of a glycyl radical at Gly-682. Functionally, catalyzes the conversion of ribonucleotides into deoxyribonucleotides, which are required for DNA synthesis and repair. In Haemophilus influenzae (strain ATCC 51907 / DSM 11121 / KW20 / Rd), this protein is Anaerobic ribonucleoside-triphosphate reductase (nrdD).